The chain runs to 151 residues: Small ribosomal subunit protein bS6 (151 aa).

Residues 97-151 (EAEPSAMMQKRDRDDRKDRDRGDRPRRRDDDFGGGDRGDRGDRGDRPERNFGGEN) are disordered. The span at 105 to 151 (QKRDRDDRKDRDRGDRPRRRDDDFGGGDRGDRGDRGDRPERNFGGEN) shows a compositional bias: basic and acidic residues.

This sequence belongs to the bacterial ribosomal protein bS6 family.

In terms of biological role, binds together with bS18 to 16S ribosomal RNA. The sequence is that of Small ribosomal subunit protein bS6 from Methylorubrum extorquens (strain CM4 / NCIMB 13688) (Methylobacterium extorquens).